Consider the following 115-residue polypeptide: Large ribosomal subunit protein bL20c (115 aa).

It belongs to the bacterial ribosomal protein bL20 family.

It is found in the plastid. The protein resides in the chloroplast. Functionally, binds directly to 23S ribosomal RNA and is necessary for the in vitro assembly process of the 50S ribosomal subunit. It is not involved in the protein synthesizing functions of that subunit. The sequence is that of Large ribosomal subunit protein bL20c from Angiopteris evecta (Mule's foot fern).